The following is a 47-amino-acid chain: MRNDVLTLTNPMEEKELEQILGGGNGVLKTISHECNMNTWQFLFTCC.

The first 23 residues, 1 to 23 (MRNDVLTLTNPMEEKELEQILGG), serve as a signal peptide directing secretion. 2,3-didehydrobutyrine occurs at positions 30 and 39. The segment at residues 30–35 (TISHEC) is a cross-link (beta-methyllanthionine (Thr-Cys)). Residues 32-46 (SHECNMNTWQFLFTC) constitute a cross-link (lanthionine (Ser-Cys)). Residues 45 to 47 (TCC) constitute a cross-link (beta-methyllanthionine (Thr-Cys)).

Maturation of lantibiotics involves the enzymatic conversion of Thr, and Ser into dehydrated AA and the formation of thioether bonds with cysteine. This is followed by membrane translocation and cleavage of the modified precursor. In terms of processing, it is not established whether the 2,3-didehydrobutyrine is the E- or Z-isomer.

It is found in the secreted. Lanthionine-containing peptide antibiotic (lantibiotic) active on Gram-positive bacteria. The bactericidal activity of lantibiotics is based on depolarization of energized bacterial cytoplasmic membranes, initiated by the formation of aqueous transmembrane pores. Ruminococcin A is a broad spectrum bacteriocin exhibiting activity against a wide range of pathogenic clostridia and B.longum. The chain is Ruminococcin-A (rumA1) from Mediterraneibacter gnavus (Ruminococcus gnavus).